The primary structure comprises 180 residues: Large ribosomal subunit protein uL5 (180 aa).

Belongs to the universal ribosomal protein uL5 family. Part of the 50S ribosomal subunit; part of the 5S rRNA/L5/L18/L25 subcomplex. Contacts the 5S rRNA and the P site tRNA. Forms a bridge to the 30S subunit in the 70S ribosome.

This is one of the proteins that bind and probably mediate the attachment of the 5S RNA into the large ribosomal subunit, where it forms part of the central protuberance. In the 70S ribosome it contacts protein S13 of the 30S subunit (bridge B1b), connecting the 2 subunits; this bridge is implicated in subunit movement. Contacts the P site tRNA; the 5S rRNA and some of its associated proteins might help stabilize positioning of ribosome-bound tRNAs. This chain is Large ribosomal subunit protein uL5, found in Streptococcus thermophilus (strain CNRZ 1066).